The primary structure comprises 190 residues: MTETPNTSSEEIQTSEPSPDNELQVLQQENANLKAELQEQNDRYLMALAEAENSRKRLQKERTEMMQYAVENTLMDFLPPIESMEKALGFASQASEEVKNWAIGFQMILQQFKQIFEEKGVVEYSSKGELFNPYLHEAVEIEETTTIPEETILEEFTKGYKIGDRPIRVAKVKVAKLPAKGNSDSNEEKE.

Residues M1–S18 show a composition bias toward polar residues. Positions M1–N21 are disordered.

The protein belongs to the GrpE family. In terms of assembly, homodimer.

It localises to the cytoplasm. In terms of biological role, participates actively in the response to hyperosmotic and heat shock by preventing the aggregation of stress-denatured proteins, in association with DnaK and GrpE. It is the nucleotide exchange factor for DnaK and may function as a thermosensor. Unfolded proteins bind initially to DnaJ; upon interaction with the DnaJ-bound protein, DnaK hydrolyzes its bound ATP, resulting in the formation of a stable complex. GrpE releases ADP from DnaK; ATP binding to DnaK triggers the release of the substrate protein, thus completing the reaction cycle. Several rounds of ATP-dependent interactions between DnaJ, DnaK and GrpE are required for fully efficient folding. In Chlamydia trachomatis serovar A (strain ATCC VR-571B / DSM 19440 / HAR-13), this protein is Protein GrpE.